The sequence spans 453 residues: Choline kinase alpha (453 aa).

Positions 22-81 are disordered; the sequence is CGGNAAPTPGVGQQRDAAGELESKQLGGRTQPLALPPPPPPPLPLPPPPSPPLADEQPEP. Over residues 55-73 the composition is skewed to pro residues; it reads ALPPPPPPPLPLPPPPSPP. Position 71 is a phosphoserine (serine 71). ATP is bound by residues 113–119, arginine 142, and 203–209; these read RGGLSNM and QFIPSRR. Position 115–117 (115–117) interacts with phosphocholine; the sequence is GLS. At lysine 243 the chain carries N6-acetyllysine. Serine 275 carries the phosphoserine modification. Residues glutamine 304 and aspartate 326 each contribute to the ATP site.

Belongs to the choline/ethanolamine kinase family. In terms of assembly, homodimer. Heterodimer with CHKB. Monomer; acetylation by KAT5 promotes dissociation of the homodimer and monomerization. In terms of processing, phosphorylated at Ser-275 by AMPK in response to glucose deprivation, leading to localization to lipid droplets. Acetylated by KAT5 at Lys-243 following phosphorylation by AMPK, leading to monomerization and conversion into a tyrosine-protein kinase. Expressed ubiquitously with the highest level in testis.

The protein localises to the cytoplasm. It is found in the cytosol. The protein resides in the lipid droplet. It catalyses the reaction choline + ATP = phosphocholine + ADP + H(+). The catalysed reaction is ethanolamine + ATP = phosphoethanolamine + ADP + H(+). The enzyme catalyses L-tyrosyl-[protein] + ATP = O-phospho-L-tyrosyl-[protein] + ADP + H(+). Its pathway is phospholipid metabolism; phosphatidylcholine biosynthesis; phosphocholine from choline: step 1/1. The protein operates within phospholipid metabolism; phosphatidylethanolamine biosynthesis; phosphatidylethanolamine from ethanolamine: step 1/3. Functionally, plays a key role in phospholipid biosynthesis by catalyzing the phosphorylation of free choline to phosphocholine, the first step in phosphatidylcholine biosynthesis. Also phosphorylates ethanolamine, thereby contributing to phosphatidylethanolamine biosynthesis. Has higher activity with choline. Its function is as follows. This isoform plays a key role in lipolysis of lipid droplets following glucose deprivation. In response to glucose deprivation, phosphorylated by AMPK, promoting localization to lipid droplets. Phosphorylation is followed by acetylation by KAT5, leading to dissociation of the homodimer into a monomer. Monomeric CHKA isoform 1 is converted into a tyrosine-protein kinase, which phosphorylates lipid droplet structural proteins PLIN2 and PLIN3, leading to lipolysis of lipid droplets. This Mus musculus (Mouse) protein is Choline kinase alpha (Chka).